The primary structure comprises 699 residues: MAREYKIEDYRNFGIMAHIDAGKTTTTERILYYTGKSHKIGEVHDGAATMDWMEQEQERGITITSAATTTFWKGRDGKTRRFNIIDTPGHVDFTIEVERSLRVLDGAIALLDANAGVEPQTETVWRQAEKYNVPRMIFCNKMDKTGADFYRSVEMIKTRLGATAVVMQLPIGAETEFKGVIDLIEMNALIWRDESLGAQWDVVEIPEDMKAKAEEYREKLIETVVDIDEAAMEAYLEGILPDNDQIRALVRRGTIDVKFHPMFCGTAFKNKGVQPLLDAVVDYLPSPMDIPAIKGIDFKTEADIERHADDAEPLSMLAFKIMNDPFVGSLTFARIYSGKLEKGASVMNTVKDKRERVGRMLQMHSNSREDIEEAFAGDIVALAGLKETTTGDTLCDPLKPVILERMEFPEPVIQIAIEPKTKGDQEKMGLALNRLAAEDPSFRVKTDQESGQTIIAGMGELHLDIIVDRMRREFKVEATVGAPQVAYRETITRQHEEDYTHKKQSGGTGQFARVKIVFEPNPEGDDFKFESKIVGGSVPKEYIPGVQKGIESVLSSGPLAGFPMLGVKATLIDGAFHDVDSSVLAFEIASRACFREAAKKAGAQLLEPMMKVEVVTPEDYVGDVIGDLNSRRGQIQGQESRGIAVVINANVPLANMFKYVDNLRSMSQGRAQYTMTFDHYSPVPSNVATEIQAKYSGQK.

One can recognise a tr-type G domain in the interval 8–288 (EDYRNFGIMA…AVVDYLPSPM (281 aa)). Residues 17 to 24 (AHIDAGKT), 86 to 90 (DTPGH), and 140 to 143 (NKMD) contribute to the GTP site.

The protein belongs to the TRAFAC class translation factor GTPase superfamily. Classic translation factor GTPase family. EF-G/EF-2 subfamily.

The protein localises to the cytoplasm. In terms of biological role, catalyzes the GTP-dependent ribosomal translocation step during translation elongation. During this step, the ribosome changes from the pre-translocational (PRE) to the post-translocational (POST) state as the newly formed A-site-bound peptidyl-tRNA and P-site-bound deacylated tRNA move to the P and E sites, respectively. Catalyzes the coordinated movement of the two tRNA molecules, the mRNA and conformational changes in the ribosome. This Rhizobium leguminosarum bv. trifolii (strain WSM2304) protein is Elongation factor G.